We begin with the raw amino-acid sequence, 148 residues long: Cofilin/actin-depolymerizing factor homolog (148 aa).

Residues Gly-4–Arg-143 form the ADF-H domain. The Nuclear localization signal motif lies at Lys-19–Lys-23.

The protein belongs to the actin-binding proteins ADF family. Post-translationally, phosphorylated in vitro by protein kinase LIMK1. Phosphorylation is required for inactivation of tsr and for cell proliferation and axon growth. Phosphorylation is negatively regulated by the panthothenate kinase fbl which catalyzes the first step in the conversion of panthothenic acid to coenzyme A. In terms of processing, dephosphorylated by protein phosphatase ssh which activates tsr.

The protein localises to the cytoplasm. The protein resides in the cytoskeleton. Its subcellular location is the nucleus matrix. Exhibits F-actin depolymerizing activity and regulates actin cytoskeleton dynamics. Required for cytokinesis in both mitotic and meiotic cells and for aster migration and separation. Promotes cell motility during ovary development and oogenesis. During larval development, required for the cell rearrangement needed for formation of terminal filaments which are stacks of somatic cells that are important for the initiation of ovarioles. Also required for border cell migration during oogenesis. During border cell migration, required for actin turnover and lamellipodial protrusion. Required for the establishment of planar cell polarity (PCP) where cells adopt a uniform orientation within the plane of an epithelium. During establishment of PCP, required for the redistribution of the PCP core proteins fz and stan/fmi to the proximodistal cell boundary. During pupal development, required for elongation of the retinal cell body and for rhabdomere morphogenesis. Required for mushroom body neuroblast proliferation and axon growth. Plays a role in the positive regulation of protein secretion. Plays a role in the regulation of nuclear localization of actin. Required for the maintenance of epithelial integrity by controlling cell junctions and is also necessary for cell survival and tissue growth through regulation of JNK and yki signaling. The chain is Cofilin/actin-depolymerizing factor homolog from Drosophila melanogaster (Fruit fly).